The sequence spans 110 residues: Large ribosomal subunit protein uL24 (110 aa).

This sequence belongs to the universal ribosomal protein uL24 family. In terms of assembly, part of the 50S ribosomal subunit.

Functionally, one of two assembly initiator proteins, it binds directly to the 5'-end of the 23S rRNA, where it nucleates assembly of the 50S subunit. One of the proteins that surrounds the polypeptide exit tunnel on the outside of the subunit. This chain is Large ribosomal subunit protein uL24, found in Ureaplasma parvum serovar 3 (strain ATCC 27815 / 27 / NCTC 11736).